A 316-amino-acid chain; its full sequence is Ribosomal RNA small subunit methyltransferase H (316 aa).

Residues 37–39 (GGH), aspartate 56, phenylalanine 83, aspartate 106, and histidine 113 each bind S-adenosyl-L-methionine. A disordered region spans residues 276 to 316 (PILPSEEETKENPASRSAKLRVLRKTKSADKKYKKENSKEE). Positions 302 to 316 (KSADKKYKKENSKEE) are enriched in basic and acidic residues.

Belongs to the methyltransferase superfamily. RsmH family.

The protein resides in the cytoplasm. It carries out the reaction cytidine(1402) in 16S rRNA + S-adenosyl-L-methionine = N(4)-methylcytidine(1402) in 16S rRNA + S-adenosyl-L-homocysteine + H(+). Specifically methylates the N4 position of cytidine in position 1402 (C1402) of 16S rRNA. The polypeptide is Ribosomal RNA small subunit methyltransferase H (Leptospira borgpetersenii serovar Hardjo-bovis (strain JB197)).